A 153-amino-acid polypeptide reads, in one-letter code: Endoribonuclease YbeY (153 aa).

Zn(2+) contacts are provided by histidine 114, histidine 118, and histidine 124.

The protein belongs to the endoribonuclease YbeY family. Zn(2+) is required as a cofactor.

Its subcellular location is the cytoplasm. In terms of biological role, single strand-specific metallo-endoribonuclease involved in late-stage 70S ribosome quality control and in maturation of the 3' terminus of the 16S rRNA. The polypeptide is Endoribonuclease YbeY (Finegoldia magna (strain ATCC 29328 / DSM 20472 / WAL 2508) (Peptostreptococcus magnus)).